The sequence spans 415 residues: Serine hydroxymethyltransferase 2 (415 aa).

(6S)-5,6,7,8-tetrahydrofolate-binding positions include Leu122 and 126–128 (GHL). The residue at position 230 (Lys230) is an N6-(pyridoxal phosphate)lysine.

This sequence belongs to the SHMT family. In terms of assembly, homodimer. It depends on pyridoxal 5'-phosphate as a cofactor.

It is found in the cytoplasm. The enzyme catalyses (6R)-5,10-methylene-5,6,7,8-tetrahydrofolate + glycine + H2O = (6S)-5,6,7,8-tetrahydrofolate + L-serine. Its pathway is one-carbon metabolism; tetrahydrofolate interconversion. The protein operates within amino-acid biosynthesis; glycine biosynthesis; glycine from L-serine: step 1/1. Its function is as follows. Catalyzes the reversible interconversion of serine and glycine with tetrahydrofolate (THF) serving as the one-carbon carrier. This reaction serves as the major source of one-carbon groups required for the biosynthesis of purines, thymidylate, methionine, and other important biomolecules. Also exhibits THF-independent aldolase activity toward beta-hydroxyamino acids, producing glycine and aldehydes, via a retro-aldol mechanism. In Burkholderia lata (strain ATCC 17760 / DSM 23089 / LMG 22485 / NCIMB 9086 / R18194 / 383), this protein is Serine hydroxymethyltransferase 2.